We begin with the raw amino-acid sequence, 153 residues long: Putative pre-16S rRNA nuclease (153 aa).

This sequence belongs to the YqgF nuclease family.

The protein localises to the cytoplasm. In terms of biological role, could be a nuclease involved in processing of the 5'-end of pre-16S rRNA. This chain is Putative pre-16S rRNA nuclease, found in Prochlorococcus marinus (strain SARG / CCMP1375 / SS120).